We begin with the raw amino-acid sequence, 73 residues long: Small, acid-soluble spore protein C5 (73 aa).

The protein belongs to the alpha/beta-type SASP family.

In terms of biological role, SASP are bound to spore DNA. They are double-stranded DNA-binding proteins that cause DNA to change to an a-like conformation. They protect the DNA backbone from chemical and enzymatic cleavage and are thus involved in dormant spore's high resistance to UV light. This is Small, acid-soluble spore protein C5 (SASP-C5) from Priestia megaterium (Bacillus megaterium).